Consider the following 322-residue polypeptide: MKIVFLDFEKGIEEFEAKIEQLRFAQDNSALDISAEIARLQTKSLGLTKSVYAKLTPWQISQVARHPQRPYTLDYVQHLFTDFEELHGDRNFADDQAIVGGLARFNGQTVMIIGHQKGRDTKEKIHRNFGMPKPEGYRKALRLMRLAEKFSIPLITFIDTPGAYPGIDAEERGQSEAIGKNLYVMAGLRIPIICVIIGEGGSGGALAIAVGDTSLMLQYSTYSVISPEGCASILWKSADKASDAAEILGITADRLKEMGLIDSIIPEPIGGAHRDYPVVMQSVKQTLQESLRKLQDIPLETLLQKRLDRLLGYGRFKINQPD.

A CoA carboxyltransferase C-terminal domain is found at 30 to 293 (ALDISAEIAR…KQTLQESLRK (264 aa)).

Belongs to the AccA family. As to quaternary structure, acetyl-CoA carboxylase is a heterohexamer composed of biotin carboxyl carrier protein (AccB), biotin carboxylase (AccC) and two subunits each of ACCase subunit alpha (AccA) and ACCase subunit beta (AccD).

The protein localises to the cytoplasm. It catalyses the reaction N(6)-carboxybiotinyl-L-lysyl-[protein] + acetyl-CoA = N(6)-biotinyl-L-lysyl-[protein] + malonyl-CoA. The protein operates within lipid metabolism; malonyl-CoA biosynthesis; malonyl-CoA from acetyl-CoA: step 1/1. Its function is as follows. Component of the acetyl coenzyme A carboxylase (ACC) complex. First, biotin carboxylase catalyzes the carboxylation of biotin on its carrier protein (BCCP) and then the CO(2) group is transferred by the carboxyltransferase to acetyl-CoA to form malonyl-CoA. In Nitrosomonas europaea (strain ATCC 19718 / CIP 103999 / KCTC 2705 / NBRC 14298), this protein is Acetyl-coenzyme A carboxylase carboxyl transferase subunit alpha.